We begin with the raw amino-acid sequence, 63 residues long: SPbeta prophage-derived uncharacterized protein YotC (63 aa).

The polypeptide is SPbeta prophage-derived uncharacterized protein YotC (yotC) (Bacillus subtilis (strain 168)).